Here is a 285-residue protein sequence, read N- to C-terminus: Acetylglutamate kinase (285 aa).

Substrate contacts are provided by residues 55–56 (GG), R77, and N171.

It belongs to the acetylglutamate kinase family. ArgB subfamily.

It is found in the cytoplasm. The catalysed reaction is N-acetyl-L-glutamate + ATP = N-acetyl-L-glutamyl 5-phosphate + ADP. It functions in the pathway amino-acid biosynthesis; L-arginine biosynthesis; N(2)-acetyl-L-ornithine from L-glutamate: step 2/4. Its function is as follows. Catalyzes the ATP-dependent phosphorylation of N-acetyl-L-glutamate. This Chlorobaculum tepidum (strain ATCC 49652 / DSM 12025 / NBRC 103806 / TLS) (Chlorobium tepidum) protein is Acetylglutamate kinase.